The following is a 77-amino-acid chain: MKLTCMMIVAVLFLTAWTFVTADDSRNGLDYLFPKARHEMNPKASRDIKRCRPGGMICGFPKPGPYCCSGWCFVVCL.

The first 22 residues, 1 to 22, serve as a signal peptide directing secretion; that stretch reads MKLTCMMIVAVLFLTAWTFVTA. The propeptide occupies 23 to 48; the sequence is DDSRNGLDYLFPKARHEMNPKASRDI. Intrachain disulfides connect Cys51–Cys68, Cys58–Cys72, and Cys67–Cys76.

This sequence belongs to the conotoxin O1 superfamily. In terms of tissue distribution, expressed by the venom duct.

The protein resides in the secreted. The polypeptide is Conotoxin VnMKLT1-012 (Conus ventricosus (Mediterranean cone)).